The following is a 270-amino-acid chain: Eukaryotic translation initiation factor 3 subunit G-1 (270 aa).

The region spanning 189–267 (AAIRISNLSE…LILSVEWSKP (79 aa)) is the RRM domain.

Belongs to the eIF-3 subunit G family. In terms of assembly, component of the eukaryotic translation initiation factor 3 (eIF-3) complex. The eIF-3 complex interacts with pix.

The protein resides in the cytoplasm. Functionally, RNA-binding component of the eukaryotic translation initiation factor 3 (eIF-3) complex, which is involved in protein synthesis of a specialized repertoire of mRNAs and, together with other initiation factors, stimulates binding of mRNA and methionyl-tRNAi to the 40S ribosome. The eIF-3 complex specifically targets and initiates translation of a subset of mRNAs involved in cell proliferation. This subunit can bind 18S rRNA. The protein is Eukaryotic translation initiation factor 3 subunit G-1 of Drosophila ananassae (Fruit fly).